The chain runs to 749 residues: Ribosomal RNA large subunit methyltransferase K/L (749 aa).

Residues 43-154 (QGYKVCLWSR…KDKATIYLDL (112 aa)) enclose the THUMP domain. The tract at residues 386–406 (VEPVAPKKTNKETPEPINPWT) is disordered.

It belongs to the methyltransferase superfamily. RlmKL family.

It localises to the cytoplasm. The enzyme catalyses guanosine(2445) in 23S rRNA + S-adenosyl-L-methionine = N(2)-methylguanosine(2445) in 23S rRNA + S-adenosyl-L-homocysteine + H(+). The catalysed reaction is guanosine(2069) in 23S rRNA + S-adenosyl-L-methionine = N(2)-methylguanosine(2069) in 23S rRNA + S-adenosyl-L-homocysteine + H(+). In terms of biological role, specifically methylates the guanine in position 2445 (m2G2445) and the guanine in position 2069 (m7G2069) of 23S rRNA. This is Ribosomal RNA large subunit methyltransferase K/L from Psychromonas ingrahamii (strain DSM 17664 / CCUG 51855 / 37).